The following is a 283-amino-acid chain: ACT domain-containing protein DS12, chloroplastic (283 aa).

A chloroplast-targeting transit peptide spans 1–56 (MAEMAVTAALRPCSGVSPAVSGTSHRRRRPAAWRALAPPPPHAGLRLSSPAVRVPR). The interval 14 to 78 (SGVSPAVSGT…SNTDTVPTPK (65 aa)) is disordered. Low complexity predominate over residues 48-63 (SSPAVRVPRAASSAAV). 2 ACT domains span residues 91-171 (IVEI…ASSQ) and 206-276 (LLVV…LRRP).

The protein resides in the plastid. Its subcellular location is the chloroplast. The chain is ACT domain-containing protein DS12, chloroplastic from Oryza sativa subsp. indica (Rice).